A 122-amino-acid chain; its full sequence is Large ribosomal subunit protein uL14 (122 aa).

It belongs to the universal ribosomal protein uL14 family. In terms of assembly, part of the 50S ribosomal subunit. Forms a cluster with proteins L3 and L19. In the 70S ribosome, L14 and L19 interact and together make contacts with the 16S rRNA in bridges B5 and B8.

In terms of biological role, binds to 23S rRNA. Forms part of two intersubunit bridges in the 70S ribosome. The polypeptide is Large ribosomal subunit protein uL14 (Acinetobacter baylyi (strain ATCC 33305 / BD413 / ADP1)).